The sequence spans 330 residues: Thioredoxin domain-containing protein 6 (330 aa).

Residues 11–115 (QVNISTQELW…QKTILDQLEA (105 aa)) form the Thioredoxin domain. The tract at residues 157-303 (ERTCTLAIIK…LFPSLKFSDK (147 aa)) is NDK. The tract at residues 300-330 (FSDKDTEAPQGGEAEATAGPTEALCFPEDVD) is disordered. Residues 307-322 (APQGGEAEATAGPTEA) are compositionally biased toward low complexity.

Belongs to the NDK family. Monomer and homodimer. As to expression, detected at very low levels in testis, lung and brain.

The protein resides in the cytoplasm. Its subcellular location is the cytoskeleton. The protein localises to the cilium axoneme. It localises to the dynein axonemal particle. Functionally, may be a regulator of microtubule physiology. This chain is Thioredoxin domain-containing protein 6, found in Homo sapiens (Human).